Reading from the N-terminus, the 216-residue chain is Cytidylate kinase (216 aa).

7–15 (GPAGTGKST) contacts ATP.

This sequence belongs to the cytidylate kinase family. Type 1 subfamily.

Its subcellular location is the cytoplasm. It catalyses the reaction CMP + ATP = CDP + ADP. The catalysed reaction is dCMP + ATP = dCDP + ADP. The protein is Cytidylate kinase of Chlamydia muridarum (strain MoPn / Nigg).